We begin with the raw amino-acid sequence, 221 residues long: Probable transaldolase (221 aa).

Lys-83 serves as the catalytic Schiff-base intermediate with substrate.

Belongs to the transaldolase family. Type 3B subfamily.

Its subcellular location is the cytoplasm. It catalyses the reaction D-sedoheptulose 7-phosphate + D-glyceraldehyde 3-phosphate = D-erythrose 4-phosphate + beta-D-fructose 6-phosphate. Its pathway is carbohydrate degradation; pentose phosphate pathway; D-glyceraldehyde 3-phosphate and beta-D-fructose 6-phosphate from D-ribose 5-phosphate and D-xylulose 5-phosphate (non-oxidative stage): step 2/3. Functionally, transaldolase is important for the balance of metabolites in the pentose-phosphate pathway. This Petrotoga mobilis (strain DSM 10674 / SJ95) protein is Probable transaldolase.